A 204-amino-acid chain; its full sequence is MARYRGPRLRVIRRLGDLPGLTRKAVPSRRAYPPGQHGQARKKRSEYAMRLEEKQKLRFNYGLTERQLVRYVRRARRVSGSTGLALLQLLEMRLDNIIFRLGMAPTIPAARQLVNHGHVTVNGRVVSIPSYQCRPGNEIGIRNKENSRRLAEENLKFPGLANLPTHLELDKNKLMAKVNSVVEREWVALQVNELLVVEYYSRKV.

The disordered stretch occupies residues 25-45 (AVPSRRAYPPGQHGQARKKRS). The 61-residue stretch at 92-152 (MRLDNIIFRL…NKENSRRLAE (61 aa)) folds into the S4 RNA-binding domain.

Belongs to the universal ribosomal protein uS4 family. Part of the 30S ribosomal subunit. Contacts protein S5. The interaction surface between S4 and S5 is involved in control of translational fidelity.

Functionally, one of the primary rRNA binding proteins, it binds directly to 16S rRNA where it nucleates assembly of the body of the 30S subunit. In terms of biological role, with S5 and S12 plays an important role in translational accuracy. The protein is Small ribosomal subunit protein uS4 of Cyanothece sp. (strain PCC 7425 / ATCC 29141).